The following is a 543-amino-acid chain: Zinc metalloproteinase (543 aa).

A signal peptide spans 1–24; sequence MHPNYYLSPLAVAIALGIASPVKA. A propeptide spanning residues 25 to 207 is cleaved from the precursor; the sequence is ADPIPLQKSS…PFVQWDDVKT (183 aa). Residue His377 participates in Zn(2+) binding. Residue Glu378 is part of the active site. Positions 381 and 401 each coordinate Zn(2+). His463 (proton donor) is an active-site residue.

It belongs to the peptidase M4 family. Zn(2+) serves as cofactor.

Its subcellular location is the secreted. Cleaves collagen, gelatin, casein, alpha-1-antitrypsin, and bovine insulin. May play a role in the pathogenesis of legionnaires disease. This Legionella pneumophila protein is Zinc metalloproteinase.